The primary structure comprises 166 residues: Endoribonuclease YbeY (166 aa).

Zn(2+) contacts are provided by H132, H136, and H142.

The protein belongs to the endoribonuclease YbeY family. Zn(2+) is required as a cofactor.

It localises to the cytoplasm. In terms of biological role, single strand-specific metallo-endoribonuclease involved in late-stage 70S ribosome quality control and in maturation of the 3' terminus of the 16S rRNA. The chain is Endoribonuclease YbeY from Clostridium botulinum (strain Langeland / NCTC 10281 / Type F).